Here is a 444-residue protein sequence, read N- to C-terminus: CCA-adding enzyme (444 aa).

ATP contacts are provided by serine 57 and arginine 60. 2 residues coordinate CTP: serine 57 and arginine 60. Mg(2+) contacts are provided by aspartate 69, aspartate 71, and aspartate 124. The ATP site is built by histidine 147, lysine 168, and tyrosine 177. Residues histidine 147, lysine 168, and tyrosine 177 each contribute to the CTP site.

The protein belongs to the tRNA nucleotidyltransferase/poly(A) polymerase family. Archaeal CCA-adding enzyme subfamily. As to quaternary structure, homodimer. Mg(2+) serves as cofactor.

It catalyses the reaction a tRNA precursor + 2 CTP + ATP = a tRNA with a 3' CCA end + 3 diphosphate. It carries out the reaction a tRNA with a 3' CCA end + 2 CTP + ATP = a tRNA with a 3' CCACCA end + 3 diphosphate. Its function is as follows. Catalyzes the addition and repair of the essential 3'-terminal CCA sequence in tRNAs without using a nucleic acid template. Adds these three nucleotides in the order of C, C, and A to the tRNA nucleotide-73, using CTP and ATP as substrates and producing inorganic pyrophosphate. tRNA 3'-terminal CCA addition is required both for tRNA processing and repair. Also involved in tRNA surveillance by mediating tandem CCA addition to generate a CCACCA at the 3' terminus of unstable tRNAs. While stable tRNAs receive only 3'-terminal CCA, unstable tRNAs are marked with CCACCA and rapidly degraded. This is CCA-adding enzyme from Methanococcus maripaludis (strain C5 / ATCC BAA-1333).